A 379-amino-acid polypeptide reads, in one-letter code: Queuine tRNA-ribosyltransferase (379 aa).

The active-site Proton acceptor is the Asp-93. Substrate-binding positions include 93 to 97 (DSGGF), Asp-147, Gln-191, and Gly-218. Residues 249–255 (GVGKPED) form an RNA binding region. Asp-268 (nucleophile) is an active-site residue. The tract at residues 273–277 (TRNAR) is RNA binding; important for wobble base 34 recognition. Residues Cys-306, Cys-308, Cys-311, and His-337 each contribute to the Zn(2+) site.

It belongs to the queuine tRNA-ribosyltransferase family. Homodimer. Within each dimer, one monomer is responsible for RNA recognition and catalysis, while the other monomer binds to the replacement base PreQ1. The cofactor is Zn(2+).

It catalyses the reaction 7-aminomethyl-7-carbaguanine + guanosine(34) in tRNA = 7-aminomethyl-7-carbaguanosine(34) in tRNA + guanine. It functions in the pathway tRNA modification; tRNA-queuosine biosynthesis. Catalyzes the base-exchange of a guanine (G) residue with the queuine precursor 7-aminomethyl-7-deazaguanine (PreQ1) at position 34 (anticodon wobble position) in tRNAs with GU(N) anticodons (tRNA-Asp, -Asn, -His and -Tyr). Catalysis occurs through a double-displacement mechanism. The nucleophile active site attacks the C1' of nucleotide 34 to detach the guanine base from the RNA, forming a covalent enzyme-RNA intermediate. The proton acceptor active site deprotonates the incoming PreQ1, allowing a nucleophilic attack on the C1' of the ribose to form the product. After dissociation, two additional enzymatic reactions on the tRNA convert PreQ1 to queuine (Q), resulting in the hypermodified nucleoside queuosine (7-(((4,5-cis-dihydroxy-2-cyclopenten-1-yl)amino)methyl)-7-deazaguanosine). This chain is Queuine tRNA-ribosyltransferase, found in Actinobacillus succinogenes (strain ATCC 55618 / DSM 22257 / CCUG 43843 / 130Z).